A 189-amino-acid polypeptide reads, in one-letter code: Thymidine kinase (189 aa).

ATP is bound by residues 9–16 and 85–88; these read GTMNSGKT and DESQ. The Proton acceptor role is filled by E86. The Zn(2+) site is built by C143, C146, C180, and H183.

This sequence belongs to the thymidine kinase family. As to quaternary structure, homotetramer.

Its subcellular location is the cytoplasm. It catalyses the reaction thymidine + ATP = dTMP + ADP + H(+). The protein is Thymidine kinase of Streptococcus pyogenes serotype M6 (strain ATCC BAA-946 / MGAS10394).